The primary structure comprises 279 residues: Large ribosomal subunit protein uL2 (279 aa).

The disordered stretch occupies residues 223–279; sequence TVRGSAMNPNDHPHGGGEGRSPVGMDAPRTPWGKRHMGVKTRNNKKSSTSMIVRRRK. Residues 254 to 267 are compositionally biased toward basic residues; it reads WGKRHMGVKTRNNK.

The protein belongs to the universal ribosomal protein uL2 family. In terms of assembly, part of the 50S ribosomal subunit. Forms a bridge to the 30S subunit in the 70S ribosome.

In terms of biological role, one of the primary rRNA binding proteins. Required for association of the 30S and 50S subunits to form the 70S ribosome, for tRNA binding and peptide bond formation. It has been suggested to have peptidyltransferase activity; this is somewhat controversial. Makes several contacts with the 16S rRNA in the 70S ribosome. The chain is Large ribosomal subunit protein uL2 from Ureaplasma urealyticum serovar 10 (strain ATCC 33699 / Western).